The chain runs to 917 residues: Major intrinsically disordered Notch2-binding receptor 1 (917 aa).

The Cytoplasmic segment spans residues 1 to 892 (MEANQEASLF…AEFRRAKVCK (892 aa)). 7 disordered regions span residues 337 to 367 (STYF…WPAK), 388 to 410 (PSEE…GPDR), 461 to 483 (SCTS…QHVL), 568 to 588 (ITNG…NVHH), 652 to 687 (SEAP…CSDA), 706 to 727 (TRPS…IASI), and 746 to 783 (NEEE…LPKQ). Polar residues predominate over residues 461–480 (SCTSGQHSSDTSSVGTQTEQ). Over residues 576–588 (KGDKCNRPENVHH) the composition is skewed to basic and acidic residues. Serine 712 carries the phosphoserine modification. The chain crosses the membrane as a helical span at residues 893–913 (IAALITAAACTVILVIVVPIC). At 914-917 (TMKS) the chain is on the extracellular side.

It belongs to the MINAR family. As to quaternary structure, interacts with NOTCH2; this interaction increases MINAR1 stability. Interacts (via N-terminus) with DEPTOR (via PDZ domain); this interaction may stabilize DEPTOR protein by impairing its ubiquitination. As to expression, expressed in brain and in islets of Langerhans.

It localises to the cell membrane. Functionally, intrinsically disordered protein which may negatively regulate mTOR signaling pathway by stabilizing the mTOR complex component DEPTOR. Negatively regulates angiogenesis. Negatively regulates cell growth. Negatively regulates neurite outgrowth in hippocampal neurons. This chain is Major intrinsically disordered Notch2-binding receptor 1 (Minar1), found in Mus musculus (Mouse).